A 424-amino-acid polypeptide reads, in one-letter code: PDZ and LIM domain protein 7 (424 aa).

A PDZ domain is found at 1–85 (MDSFKVVLEG…RLSLSLSRAQ (85 aa)). Ser78 carries the phosphoserine modification. Residues 81-98 (LSRAQPAQSKPQKVQTPD) are compositionally biased toward polar residues. The tract at residues 81–221 (LSRAQPAQSK…HTQPATPTPM (141 aa)) is disordered. The residue at position 96 (Thr96) is a Phosphothreonine. The span at 110 to 123 (SKQRLMEDTEDWRP) shows a compositional bias: basic and acidic residues. Residues 174 to 187 (EPWPGPTTPSPTSR) show a composition bias toward pro residues. Over residues 204–221 (KTSTVLTRHTQPATPTPM) the composition is skewed to polar residues. LIM zinc-binding domains follow at residues 247-305 (PVCH…VRYA), 306-365 (PSCA…MFGT), and 366-424 (KCRG…FSHV).

As to quaternary structure, binds via its LIM zinc-binding 3 domain (LIM 3) domain to endocytic codes of INSR, but not with those of IGF1R, LDLR, TFRC, or EGFR. Interacts with various PKC isoforms through the LIM zinc-binding domains. Binds to RET in a phosphorylation-independent manner via its LIM zinc-binding 2 domain (LIM 2). Probably part of a complex with SHC and the RET dimer. Interacts with TPM2, TBX4 and TBX5.

The protein resides in the cytoplasm. Its subcellular location is the cytoskeleton. In terms of biological role, may function as a scaffold on which the coordinated assembly of proteins can occur. May play a role as an adapter that, via its PDZ domain, localizes LIM-binding proteins to actin filaments of both skeletal muscle and nonmuscle tissues. Involved in both of the two fundamental mechanisms of bone formation, direct bone formation (e.g. embryonic flat bones mandible and cranium), and endochondral bone formation (e.g. embryonic long bone development). Plays a role during fracture repair. Involved in BMP6 signaling pathway. The protein is PDZ and LIM domain protein 7 (PDLIM7) of Bos taurus (Bovine).